A 723-amino-acid chain; its full sequence is Polyribonucleotide nucleotidyltransferase (723 aa).

Mg(2+)-binding residues include Asp-488 and Asp-494. Positions 555-614 (PKIITLNIKPEKIKDVIGPGGKQINAIIEETGVKIDIEQDGTVYIASQDQAMNRKAIAII) constitute a KH domain. Residues 624 to 692 (GEVYTGKVRR…HQGRVNLSRK (69 aa)) form the S1 motif domain. Positions 692-723 (KALLEKKEQPEGDKKPQAEKKFYPKTKKPESK) are disordered. A compositionally biased stretch (basic and acidic residues) spans 693–723 (ALLEKKEQPEGDKKPQAEKKFYPKTKKPESK).

It belongs to the polyribonucleotide nucleotidyltransferase family. Requires Mg(2+) as cofactor.

It localises to the cytoplasm. The enzyme catalyses RNA(n+1) + phosphate = RNA(n) + a ribonucleoside 5'-diphosphate. Its function is as follows. Involved in mRNA degradation. Catalyzes the phosphorolysis of single-stranded polyribonucleotides processively in the 3'- to 5'-direction. This chain is Polyribonucleotide nucleotidyltransferase, found in Listeria innocua serovar 6a (strain ATCC BAA-680 / CLIP 11262).